Consider the following 459-residue polypeptide: Phosphomethylpyrimidine synthase (459 aa).

Substrate contacts are provided by residues N81, M110, Y140, H176, 196 to 198 (SRG), 237 to 240 (DSLR), and E276. H280 provides a ligand contact to Zn(2+). Residue Y303 participates in substrate binding. H344 lines the Zn(2+) pocket. C424, C427, and C432 together coordinate [4Fe-4S] cluster.

Belongs to the ThiC family. The cofactor is [4Fe-4S] cluster.

The enzyme catalyses 5-amino-1-(5-phospho-beta-D-ribosyl)imidazole + S-adenosyl-L-methionine = 4-amino-2-methyl-5-(phosphooxymethyl)pyrimidine + CO + 5'-deoxyadenosine + formate + L-methionine + 3 H(+). It functions in the pathway cofactor biosynthesis; thiamine diphosphate biosynthesis. In terms of biological role, catalyzes the synthesis of the hydroxymethylpyrimidine phosphate (HMP-P) moiety of thiamine from aminoimidazole ribotide (AIR) in a radical S-adenosyl-L-methionine (SAM)-dependent reaction. The protein is Phosphomethylpyrimidine synthase of Gloeobacter violaceus (strain ATCC 29082 / PCC 7421).